Consider the following 153-residue polypeptide: uncharacterized protein (153 aa).

Positions 1–25 are cleaved as a signal peptide; the sequence is MKKRQYLKSLYVALLGTLCYLSVNA.

This is an uncharacterized protein from Pasteurella multocida (strain Pm70).